The sequence spans 440 residues: Nitrilase and fragile histidine triad fusion protein NitFhit (440 aa).

A CN hydrolase domain is found at 14 to 264; that stretch reads RHFIAVCQMT…VDMCFAEIDL (251 aa). Residues Glu-54, Lys-127, and Cys-169 contribute to the active site. An HIT domain is found at 297–405; it reads GGLKFARFNI…LPRRAGDFGD (109 aa). Positions 390 to 394 match the Histidine triad motif motif; the sequence is HVHIH. Catalysis depends on His-392, which acts as the Tele-AMP-histidine intermediate.

It in the N-terminal section; belongs to the UPF0012 family. Homotetramer. Requires Mn(2+) as cofactor.

The catalysed reaction is P(1),P(3)-bis(5'-adenosyl) triphosphate + H2O = AMP + ADP + 2 H(+). Cleaves A-5'-PPP-5'A to yield AMP and ADP. This is Nitrilase and fragile histidine triad fusion protein NitFhit from Caenorhabditis elegans.